A 92-amino-acid chain; its full sequence is Cell division protein FtsB (92 aa).

Residues 1 to 3 are Cytoplasmic-facing; it reads MKW. A helical membrane pass occupies residues 4-21; the sequence is VTVVLSFALVCCQYSLWF. At 22–92 the chain is on the periplasmic side; sequence GKGSIGRNSS…TFYRLIRHNR (71 aa). Residues 28–50 adopt a coiled-coil conformation; the sequence is RNSSLREQIAVQEEKNQTLALRN.

The protein belongs to the FtsB family. Part of a complex composed of FtsB, FtsL and FtsQ.

Its subcellular location is the cell inner membrane. Functionally, essential cell division protein. May link together the upstream cell division proteins, which are predominantly cytoplasmic, with the downstream cell division proteins, which are predominantly periplasmic. The polypeptide is Cell division protein FtsB (Neisseria meningitidis serogroup C (strain 053442)).